A 230-amino-acid polypeptide reads, in one-letter code: dITP/XTP pyrophosphatase (230 aa).

7–12 contacts substrate; it reads STNPGK. Positions 41 and 70 each coordinate Mg(2+). Aspartate 70 functions as the Proton acceptor in the catalytic mechanism. Substrate is bound by residues serine 71, 181 to 184, lysine 205, and 210 to 211; these read FGYD and HR.

The protein belongs to the HAM1 NTPase family. In terms of assembly, homodimer. The cofactor is Mg(2+).

The enzyme catalyses XTP + H2O = XMP + diphosphate + H(+). It carries out the reaction dITP + H2O = dIMP + diphosphate + H(+). The catalysed reaction is ITP + H2O = IMP + diphosphate + H(+). Functionally, pyrophosphatase that catalyzes the hydrolysis of nucleoside triphosphates to their monophosphate derivatives, with a high preference for the non-canonical purine nucleotides XTP (xanthosine triphosphate), dITP (deoxyinosine triphosphate) and ITP. Seems to function as a house-cleaning enzyme that removes non-canonical purine nucleotides from the nucleotide pool, thus preventing their incorporation into DNA/RNA and avoiding chromosomal lesions. This is dITP/XTP pyrophosphatase from Anaeromyxobacter sp. (strain Fw109-5).